Consider the following 435-residue polypeptide: Adenylosuccinate synthetase (435 aa).

Residues 17–23 and 47–49 contribute to the GTP site; these read GDEGKGK and GHT. Asp18 (proton acceptor) is an active-site residue. Positions 18 and 47 each coordinate Mg(2+). IMP-binding positions include 18 to 21, 45 to 48, Thr138, Arg152, Asn232, Thr247, and Arg311; these read DEGK and NAGH. The active-site Proton donor is the His48. Residue 307–313 participates in substrate binding; it reads VTTGRKR. GTP-binding positions include Arg313, 339–341, and 421–423; these read KLD and GVG.

It belongs to the adenylosuccinate synthetase family. In terms of assembly, homodimer. Mg(2+) is required as a cofactor.

It localises to the cytoplasm. The enzyme catalyses IMP + L-aspartate + GTP = N(6)-(1,2-dicarboxyethyl)-AMP + GDP + phosphate + 2 H(+). It functions in the pathway purine metabolism; AMP biosynthesis via de novo pathway; AMP from IMP: step 1/2. Functionally, plays an important role in the de novo pathway and in the salvage pathway of purine nucleotide biosynthesis. Catalyzes the first committed step in the biosynthesis of AMP from IMP. This chain is Adenylosuccinate synthetase, found in Caenorhabditis briggsae.